A 150-amino-acid chain; its full sequence is Viral late gene transcription factor 2 (150 aa).

Belongs to the chordopoxvirinae VLTF-2 family. As to quaternary structure, interacts with itself. Interacts with the late transcription factors VLTF-1.

Its function is as follows. Acts with RNA polymerase to initiate transcription from late gene promoters. This is Viral late gene transcription factor 2 (VLTF2) from Homo sapiens (Human).